The sequence spans 335 residues: Nucleoid-associated protein PC1_1634 (335 aa).

The protein belongs to the YejK family.

The protein localises to the cytoplasm. The protein resides in the nucleoid. The protein is Nucleoid-associated protein PC1_1634 of Pectobacterium carotovorum subsp. carotovorum (strain PC1).